Here is a 105-residue protein sequence, read N- to C-terminus: Early E3A 12.1 kDa protein (105 aa).

Belongs to the adenoviridae E3A-2 family.

Its function is as follows. Not yet known. This chain is Early E3A 12.1 kDa protein, found in Human adenovirus A serotype 12 (HAdV-12).